Reading from the N-terminus, the 318-residue chain is UDP-N-acetylenolpyruvoylglucosamine reductase (318 aa).

Residues 38-204 (IGGVCPVIVE…LGIEILLKEG (167 aa)) form the FAD-binding PCMH-type domain. The active site involves Arg182. The span at 212 to 229 (SLKDKRDRRNSSQPENKK) shows a compositional bias: basic and acidic residues. The disordered stretch occupies residues 212–232 (SLKDKRDRRNSSQPENKKSAG). Ser233 (proton donor) is an active-site residue. Residue Glu310 is part of the active site.

The protein belongs to the MurB family. FAD is required as a cofactor.

It localises to the cytoplasm. The catalysed reaction is UDP-N-acetyl-alpha-D-muramate + NADP(+) = UDP-N-acetyl-3-O-(1-carboxyvinyl)-alpha-D-glucosamine + NADPH + H(+). It participates in cell wall biogenesis; peptidoglycan biosynthesis. Cell wall formation. The chain is UDP-N-acetylenolpyruvoylglucosamine reductase from Leptospira interrogans serogroup Icterohaemorrhagiae serovar copenhageni (strain Fiocruz L1-130).